The chain runs to 189 residues: Protein C1orf43 homolog (189 aa).

The chain crosses the membrane as a helical span at residues Val11–Val31.

It localises to the membrane. It is found in the golgi apparatus. Its subcellular location is the mitochondrion. General regulator of phagocytosis. Required to uptake Gram negative bacterium by macrophages. The sequence is that of Protein C1orf43 homolog from Pongo abelii (Sumatran orangutan).